A 445-amino-acid polypeptide reads, in one-letter code: MQVTETLSAGLKRGFTVTVPAGELESKRTARLKELGQSMNLPGFRPGKVPLSIVKQRYGDAVQGEVLEQAVSDATRALMDERGLRPAMQPRVDLVAGAEPGGKADLEFKVEVELLPDIAQPDLSTLSLTRLKATPDAETIDKALKDIASRQRDFETIEDVRPAAQGDVVVVDFVGKVDGVAFEGGTAQDVNVELGGAGFIPGFAEQIEGMSPGEEKVITVTFPADYSAENLAGKEATFDITAKALKRPVDVEIDDEMAKKIGFEGLEQVRELITRQVEQEYEQLSRLRIKRELLDALAEKTDFEAPQGMVEAEFAQIWQRVEADRKAGELDEEDKEKDEDTLRADYRKIAERRVKLGLLLAEIGRANAITVSQDEMLQAIRAEAMRYPGQEQQVFEFFRKNPQAAESLRGPIFENKVVDYVIELATVEDKDVTPEELAEIPPADL.

The region spanning 166–251 is the PPIase FKBP-type domain; sequence GDVVVVDFVG…AKALKRPVDV (86 aa).

The protein belongs to the FKBP-type PPIase family. Tig subfamily.

Its subcellular location is the cytoplasm. The catalysed reaction is [protein]-peptidylproline (omega=180) = [protein]-peptidylproline (omega=0). Functionally, involved in protein export. Acts as a chaperone by maintaining the newly synthesized protein in an open conformation. Functions as a peptidyl-prolyl cis-trans isomerase. The sequence is that of Trigger factor from Gluconacetobacter diazotrophicus (strain ATCC 49037 / DSM 5601 / CCUG 37298 / CIP 103539 / LMG 7603 / PAl5).